Here is a 618-residue protein sequence, read N- to C-terminus: Alpha-dioxygenase PIOX (618 aa).

His157 (proton acceptor) is an active-site residue. Residue Asp158 participates in Ca(2+) binding. Residue His162 participates in heme b binding. The Ca(2+) site is built by Thr210, Trp212, Asp214, and Ser216. Residue His311 participates in hexadecanoate binding. Heme b contacts are provided by His382, Arg479, and Arg483. Glu599 contributes to the hexadecanoate binding site.

Belongs to the peroxidase family. Requires heme b as cofactor. The cofactor is Ca(2+).

It carries out the reaction a 1,2-saturated fatty acid + O2 = a (2R)-2-hydroperoxy fatty acid. It catalyses the reaction (9Z,12Z)-octadecadienoate + O2 = (2R,9Z,12Z)-2-hydroperoxyoctadecadienoate. The enzyme catalyses hexadecanoate + O2 = (2R)-2-hydroperoxyhexadecanoate. The catalysed reaction is (9Z,12Z,15Z)-octadecatrienoate + O2 = (R)-2-hydroperoxy-(9Z,12Z,15Z)-octadecatrienoate. It carries out the reaction tetradecanoate + O2 = (2R)-2-hydroperoxytetradecanoate. It catalyses the reaction octadecanoate + O2 = (2R)-2-hydroperoxyoctadecanoate. The enzyme catalyses (9Z)-octadecenoate + O2 = (2R,9Z)-2-hydroperoxyoctadecenoate. Alpha-dioxygenase that catalyzes the primary oxygenation step of a variety of 14-20 carbon fatty acids, containing up to three unsaturated bonds, into their corresponding 2R-hydroperoxides. Involved in the production of oxylipins that function in cell signaling, wound healing, and protection from infection. The protein is Alpha-dioxygenase PIOX of Oryza sativa subsp. japonica (Rice).